A 92-amino-acid chain; its full sequence is Small ribosomal subunit protein uS19c (92 aa).

Belongs to the universal ribosomal protein uS19 family.

Its subcellular location is the plastid. The protein localises to the chloroplast. Its function is as follows. Protein S19 forms a complex with S13 that binds strongly to the 16S ribosomal RNA. This chain is Small ribosomal subunit protein uS19c, found in Calycanthus floridus var. glaucus (Eastern sweetshrub).